Here is a 56-residue protein sequence, read N- to C-terminus: Large ribosomal subunit protein bL32 (56 aa).

This sequence belongs to the bacterial ribosomal protein bL32 family.

The polypeptide is Large ribosomal subunit protein bL32 (Prochlorococcus marinus (strain MIT 9215)).